The primary structure comprises 165 residues: Nicotine 6-hydroxylase small subunit (165 aa).

The 2Fe-2S ferredoxin-type domain maps to 10-86 (VEIDVEVNGR…GRSIRTVEDL (77 aa)). Cys48, Cys53, Cys56, and Cys68 together coordinate [2Fe-2S] cluster.

In terms of assembly, heterotrimer composed of a large subunit (NdhL), a medium subunit (NdhM) and a small subunit (NdhS). The cofactor is [2Fe-2S] cluster.

Its subcellular location is the cytoplasm. It catalyses the reaction (R)-nicotine + A + H2O = (R)-6-hydroxynicotine + AH2. The enzyme catalyses (S)-nicotine + A + H2O = (S)-6-hydroxynicotine + AH2. It participates in alkaloid degradation; nicotine degradation; 6-hydroxypseudooxynicotine from nicotine (R-isomer route): step 1/2. It functions in the pathway alkaloid degradation; nicotine degradation; 6-hydroxypseudooxynicotine from nicotine (S-isomer route): step 1/2. Nicotine dehydrogenase activity is inhibited by tungsten. Component of the nicotine 6-hydroxylase, which is involved in the degradation of nicotine. Catalyzes the hydroxylation of the pyridine ring at C6 to form 6-hydroxynicotine. Can use both L-nicotine and D-nicotine. This chain is Nicotine 6-hydroxylase small subunit, found in Paenarthrobacter nicotinovorans (Arthrobacter nicotinovorans).